The chain runs to 892 residues: Chromodomain-helicase-DNA-binding protein 3 (892 aa).

Residues 1–20 are compositionally biased toward basic and acidic residues; it reads MSSKRGADPDWKTPGKASKD. Positions 1 to 29 are disordered; the sequence is MSSKRGADPDWKTPGKASKDKRPKTNAKK. Residues 35–82 form a PHD-type zinc finger; it reads EEYCKVCSDGGDLLCCDSCPSVYHRTCLSPPLKSIPKGDWICPRCIPL. Chromo domains are found at residues 84-156 and 179-240; these read GKAE…PSLE and LLVQ…GRQR. Positions 279 to 458 constitute a Helicase ATP-binding domain; that stretch reads RYSWGQGIPT…FHLLNFLSSG (180 aa). 292-299 is a binding site for ATP; sequence DEMGLGKT. Residues 409-412 carry the DEAH box motif; that stretch reads DEAH. The Helicase C-terminal domain occupies 590–739; sequence LLSKMLKQLK…LTHLVVRPGM (150 aa). Residues 839 to 892 form a disordered region; sequence SQPKLPKKQKKQSQQSQVDVESIMGKGKRIRKEIDYSNQYPSPNRATPSSIVLM. Residues 874–892 show a composition bias toward polar residues; the sequence is YSNQYPSPNRATPSSIVLM.

The protein belongs to the SNF2/RAD54 helicase family. As to quaternary structure, monomer.

Its subcellular location is the nucleus. It is found in the chromosome. The enzyme catalyses ATP + H2O = ADP + phosphate + H(+). Its activity is regulated as follows. ATPase activity is stimulated by binding to DNA or nucleosomes, but is strongly activated by nucleosomes. ATP-dependent chromatin-remodeling factor which acts in nucleosome-remodeling by catalyzing ATP-dependent nucleosome mobilization. Likely to be involved in the regulation of transcription. This is Chromodomain-helicase-DNA-binding protein 3 from Drosophila melanogaster (Fruit fly).